Reading from the N-terminus, the 101-residue chain is Protein S100-A4 (101 aa).

At Lys7 the chain carries N6-acetyllysine. 2 EF-hand domains span residues 12 to 47 and 50 to 85; these read MVSTFHKYSGKEGDKFKLNRSELKELLMRELPSFLG and TDEAAFQKLMSNLDSNRDNEVDFQEYCVFLSCVAMM. Ca(2+) contacts are provided by Lys28 and Glu33. Position 35 is an N6-acetyllysine (Lys35). Asp63, Asn65, Asp67, Glu69, and Glu74 together coordinate Ca(2+).

The protein belongs to the S-100 family. As to quaternary structure, homodimer. Interacts with PPFIBP1 in a calcium-dependent mode. Interacts with PGLYRP1; this complex acts as a chemoattractant that promotes lymphocyte movement. Interacts with MYH9; this interaction increases cell motility. Interacts with Annexin 2/ANXA2. Interacts with TP53; this interaction promotes TP53 degradation. Interacts with CCR5 and CXCR3. Interacts with FCGR3A; this interaction inhibits PKC-dependent phosphorylation of FCGR3A.

It is found in the secreted. Its subcellular location is the nucleus. The protein resides in the cytoplasm. Calcium-binding protein that plays a role in various cellular processes including motility, angiogenesis, cell differentiation, apoptosis, and autophagy. Increases cell motility and invasiveness by interacting with non-muscle myosin heavy chain (NMMHC) IIA/MYH9. Mechanistically, promotes filament depolymerization and increases the amount of soluble myosin-IIA, resulting in the formation of stable protrusions facilitating chemotaxis. Also modulates the pro-apoptotic function of TP53 by binding to its C-terminal transactivation domain within the nucleus and reducing its protein levels. Within the extracellular space, stimulates cytokine production including granulocyte colony-stimulating factor and CCL24 from T-lymphocytes. In addition, stimulates T-lymphocyte chemotaxis by acting as a chemoattractant complex with PGLYRP1 that promotes lymphocyte migration via CCR5 and CXCR3 receptors. This chain is Protein S100-A4 (S100A4), found in Canis lupus familiaris (Dog).